A 431-amino-acid polypeptide reads, in one-letter code: Adenylosuccinate synthetase (431 aa).

GTP is bound by residues 13-19 and 41-43; these read GDEGKGK and GHT. D14 acts as the Proton acceptor in catalysis. Mg(2+) contacts are provided by D14 and G41. IMP contacts are provided by residues 14 to 17, 39 to 42, T130, R144, Q225, T240, and R304; these read DEGK and NAGH. The active-site Proton donor is the H42. Residue 300 to 306 participates in substrate binding; the sequence is AVTGRPR. GTP is bound by residues R306, 332-334, and 415-417; these read KLD and STG.

This sequence belongs to the adenylosuccinate synthetase family. Homodimer. Mg(2+) is required as a cofactor.

It localises to the cytoplasm. The catalysed reaction is IMP + L-aspartate + GTP = N(6)-(1,2-dicarboxyethyl)-AMP + GDP + phosphate + 2 H(+). Its pathway is purine metabolism; AMP biosynthesis via de novo pathway; AMP from IMP: step 1/2. Plays an important role in the de novo pathway of purine nucleotide biosynthesis. Catalyzes the first committed step in the biosynthesis of AMP from IMP. The polypeptide is Adenylosuccinate synthetase (Legionella pneumophila (strain Lens)).